Here is a 603-residue protein sequence, read N- to C-terminus: Spastin (603 aa).

Positions 1 to 34 (MNSPGGRNNKKKPVTPAAETGPGPPTPPPPPAET) are disordered. At 1 to 54 (MNSPGGRNNKKKPVTPAAETGPGPPTPPPPPAETQVLLAPPSLHKRNLYLFSYP) the chain is on the cytoplasmic side. Residues 22–32 (PGPPTPPPPPA) are compositionally biased toward pro residues. Residues 55 to 75 (LLAAFSLLRFLAFQLGLLFVW) constitute an intramembrane region (helical). At 76 to 603 (FCERLSRRVM…WNKEFGDTTV (528 aa)) the chain is on the cytoplasmic side. The 76-residue stretch at 113–188 (YHQQAFQYIS…LMAKDRLQLL (76 aa)) folds into the MIT domain. The disordered stretch occupies residues 216–294 (GLLKPEKGAV…RTNKPTTPTT (79 aa)). Residues 219 to 231 (KPEKGAVPKKKDP) are compositionally biased toward basic and acidic residues. Positions 281–294 (KNNTRTNKPTTPTT) are enriched in low complexity. 369 to 376 (GPPGNGKT) contacts ATP.

Belongs to the AAA ATPase family. Spastin subfamily. In terms of assembly, homohexamer. The homohexamer is stabilized by ATP-binding. The homohexamer may adopt a ring conformation through which microtubules pass prior to being severed. Interacts with microtubules.

It localises to the membrane. Its subcellular location is the cytoplasm. It is found in the cytoskeleton. The protein localises to the microtubule organizing center. The protein resides in the centrosome. It localises to the perinuclear region. Its subcellular location is the nucleus. The catalysed reaction is n ATP + n H2O + a microtubule = n ADP + n phosphate + (n+1) alpha/beta tubulin heterodimers.. In terms of biological role, ATP-dependent microtubule severing protein that specifically recognizes and cuts microtubules that are polyglutamylated. Preferentially recognizes and acts on microtubules decorated with short polyglutamate tails: severing activity increases as the number of glutamates per tubulin rises from one to eight, but decreases beyond this glutamylation threshold. Microtubule severing promotes reorganization of cellular microtubule arrays and the release of microtubules from the centrosome following nucleation. Required for membrane traffic from the endoplasmic reticulum (ER) to the Golgi and for completion of the abscission stage of cytokinesis. Also plays a role in axon growth and the formation of axonal branches. This chain is Spastin, found in Xenopus tropicalis (Western clawed frog).